A 572-amino-acid chain; its full sequence is uncharacterized protein (572 aa).

Positions 13 to 45 (ALIAKPKGKTVSGDGADPKKRGRPKKNATEPAV) are disordered. Positions 177-204 (VLTKEMEEKLEALDRDMRTAEETKVSIA) form a coiled coil.

This is an uncharacterized protein from Dryophytes versicolor (chameleon treefrog).